Here is a 117-residue protein sequence, read N- to C-terminus: uncharacterized protein (117 aa).

The disordered stretch occupies residues 1 to 20 (METKKLIGKPLQPARPVRHL).

This is an uncharacterized protein from Homo sapiens (Human).